The sequence spans 217 residues: Protein-L-isoaspartate O-methyltransferase (217 aa).

S64 is a catalytic residue.

This sequence belongs to the methyltransferase superfamily. L-isoaspartyl/D-aspartyl protein methyltransferase family.

It localises to the cytoplasm. The catalysed reaction is [protein]-L-isoaspartate + S-adenosyl-L-methionine = [protein]-L-isoaspartate alpha-methyl ester + S-adenosyl-L-homocysteine. In terms of biological role, catalyzes the methyl esterification of L-isoaspartyl residues in peptides and proteins that result from spontaneous decomposition of normal L-aspartyl and L-asparaginyl residues. It plays a role in the repair and/or degradation of damaged proteins. The chain is Protein-L-isoaspartate O-methyltransferase from Azorhizobium caulinodans (strain ATCC 43989 / DSM 5975 / JCM 20966 / LMG 6465 / NBRC 14845 / NCIMB 13405 / ORS 571).